The sequence spans 467 residues: Probable citrate synthase 1, mitochondrial (467 aa).

Residues His303, His349, and Asp404 contribute to the active site.

The protein belongs to the citrate synthase family. Homodimer.

It is found in the mitochondrion matrix. It catalyses the reaction oxaloacetate + acetyl-CoA + H2O = citrate + CoA + H(+). It participates in carbohydrate metabolism; tricarboxylic acid cycle; isocitrate from oxaloacetate: step 1/2. The chain is Probable citrate synthase 1, mitochondrial from Aedes aegypti (Yellowfever mosquito).